The primary structure comprises 318 residues: Mitochondrial coenzyme A transporter SLC25A42 (318 aa).

Solcar repeat units follow at residues 31–117 (RQVL…YKRI), 129–214 (LPPW…LKSL), and 224–312 (PYPF…MQIL). The next 6 helical transmembrane spans lie at 33 to 53 (VLSSLLSGALAGALAKTAVAP), 89 to 109 (LWRGNSATMVRVVPYAAIQFS), 135 to 155 (LFAGALAGTTAASLTYPLDLV), 186 to 206 (LYHGFMPTVLGVIPYAGLSFF), 230 to 250 (MIFGACAGLIGQSASYPLDVV), and 293 to 313 (VKGPIAVGISFTTFDLMQILL).

It belongs to the mitochondrial carrier (TC 2.A.29) family.

The protein resides in the mitochondrion inner membrane. The enzyme catalyses ADP(out) + CoA(in) = ADP(in) + CoA(out). It carries out the reaction 3'-dephospho-CoA(in) + ADP(out) = 3'-dephospho-CoA(out) + ADP(in). It catalyses the reaction adenosine 3',5'-bisphosphate(in) + ADP(out) = adenosine 3',5'-bisphosphate(out) + ADP(in). The catalysed reaction is AMP(in) + ADP(out) = AMP(out) + ADP(in). The enzyme catalyses dADP(in) + ADP(out) = dADP(out) + ADP(in). It carries out the reaction ADP(in) + ATP(out) = ADP(out) + ATP(in). In terms of biological role, mitochondrial carrier mediating the transport of coenzyme A (CoA) in mitochondria in exchange for intramitochondrial (deoxy)adenine nucleotides and adenosine 3',5'-diphosphate. The polypeptide is Mitochondrial coenzyme A transporter SLC25A42 (SLC25A42) (Homo sapiens (Human)).